Here is a 155-residue protein sequence, read N- to C-terminus: Small ribosomal subunit protein uS9 (155 aa).

The protein belongs to the universal ribosomal protein uS9 family.

This is Small ribosomal subunit protein uS9 from Rhizobium etli (strain CIAT 652).